The following is a 238-amino-acid chain: Transcription factor MYB27 (238 aa).

HTH myb-type domains are found at residues 6-58 and 59-113; these read EETL…MNYL and NPTL…RKKQ. The Nuclear localization signal signature appears at 31–38; it reads ERRWDSLA. 2 DNA-binding regions (H-T-H motif) span residues 34–58 and 86–109; these read WDSLAIVSGLKRSGKSCRLRWMNYL and WSKIARRLPGRTDNEIKNYWRTHY.

The protein localises to the nucleus. The sequence is that of Transcription factor MYB27 from Arabidopsis thaliana (Mouse-ear cress).